A 184-amino-acid chain; its full sequence is Holliday junction branch migration complex subunit RuvA (184 aa).

The domain I stretch occupies residues 1-64 (MIVAVEGIIT…EDADLLYGFL (64 aa)). A domain II region spans residues 65–145 (DEKEKRMFEM…ANDGEQYKIE (81 aa)). Position 145 (Glu145) is a region of interest, flexible linker. A domain III region spans residues 145–184 (ETISALENLGFKRDKINKILLNCKSTNTADLIKEALKKLA).

This sequence belongs to the RuvA family. As to quaternary structure, homotetramer. Forms an RuvA(8)-RuvB(12)-Holliday junction (HJ) complex. HJ DNA is sandwiched between 2 RuvA tetramers; dsDNA enters through RuvA and exits via RuvB. An RuvB hexamer assembles on each DNA strand where it exits the tetramer. Each RuvB hexamer is contacted by two RuvA subunits (via domain III) on 2 adjacent RuvB subunits; this complex drives branch migration. In the full resolvosome a probable DNA-RuvA(4)-RuvB(12)-RuvC(2) complex forms which resolves the HJ.

The protein localises to the cytoplasm. Functionally, the RuvA-RuvB-RuvC complex processes Holliday junction (HJ) DNA during genetic recombination and DNA repair, while the RuvA-RuvB complex plays an important role in the rescue of blocked DNA replication forks via replication fork reversal (RFR). RuvA specifically binds to HJ cruciform DNA, conferring on it an open structure. The RuvB hexamer acts as an ATP-dependent pump, pulling dsDNA into and through the RuvAB complex. HJ branch migration allows RuvC to scan DNA until it finds its consensus sequence, where it cleaves and resolves the cruciform DNA. The sequence is that of Holliday junction branch migration complex subunit RuvA from Campylobacter hominis (strain ATCC BAA-381 / DSM 21671 / CCUG 45161 / LMG 19568 / NCTC 13146 / CH001A).